The following is a 334-amino-acid chain: Holliday junction branch migration complex subunit RuvB (334 aa).

Positions 4-184 are large ATPase domain (RuvB-L); it reads ADRLIQPQLQ…FGIPLRLEFY (181 aa). ATP-binding positions include arginine 24, glycine 65, lysine 68, threonine 69, threonine 70, 131–133, arginine 174, tyrosine 184, and arginine 221; that span reads EDY. Mg(2+) is bound at residue threonine 69. The interval 185–255 is small ATPAse domain (RuvB-S); sequence NIKDLSTIVT…VADHALDLLD (71 aa). Positions 258–334 are head domain (RuvB-H); the sequence is NEGFDYMDRK…YQHFQLIKPE (77 aa). Residues arginine 294, arginine 313, and arginine 318 each coordinate DNA.

Belongs to the RuvB family. In terms of assembly, homohexamer. Forms an RuvA(8)-RuvB(12)-Holliday junction (HJ) complex. HJ DNA is sandwiched between 2 RuvA tetramers; dsDNA enters through RuvA and exits via RuvB. An RuvB hexamer assembles on each DNA strand where it exits the tetramer. Each RuvB hexamer is contacted by two RuvA subunits (via domain III) on 2 adjacent RuvB subunits; this complex drives branch migration. In the full resolvosome a probable DNA-RuvA(4)-RuvB(12)-RuvC(2) complex forms which resolves the HJ.

Its subcellular location is the cytoplasm. The catalysed reaction is ATP + H2O = ADP + phosphate + H(+). Functionally, the RuvA-RuvB-RuvC complex processes Holliday junction (HJ) DNA during genetic recombination and DNA repair, while the RuvA-RuvB complex plays an important role in the rescue of blocked DNA replication forks via replication fork reversal (RFR). RuvA specifically binds to HJ cruciform DNA, conferring on it an open structure. The RuvB hexamer acts as an ATP-dependent pump, pulling dsDNA into and through the RuvAB complex. RuvB forms 2 homohexamers on either side of HJ DNA bound by 1 or 2 RuvA tetramers; 4 subunits per hexamer contact DNA at a time. Coordinated motions by a converter formed by DNA-disengaged RuvB subunits stimulates ATP hydrolysis and nucleotide exchange. Immobilization of the converter enables RuvB to convert the ATP-contained energy into a lever motion, pulling 2 nucleotides of DNA out of the RuvA tetramer per ATP hydrolyzed, thus driving DNA branch migration. The RuvB motors rotate together with the DNA substrate, which together with the progressing nucleotide cycle form the mechanistic basis for DNA recombination by continuous HJ branch migration. Branch migration allows RuvC to scan DNA until it finds its consensus sequence, where it cleaves and resolves cruciform DNA. In Shewanella sp. (strain W3-18-1), this protein is Holliday junction branch migration complex subunit RuvB.